The primary structure comprises 144 residues: Large ribosomal subunit protein uL15 (144 aa).

Basic residues predominate over residues 1–14; that stretch reads MVVRREKKSRKMRG. The segment at 1–35 is disordered; the sequence is MVVRREKKSRKMRGSRTMGWGIRGQHRDRGSQGGR.

Belongs to the universal ribosomal protein uL15 family. As to quaternary structure, part of the 50S ribosomal subunit.

In terms of biological role, binds to the 23S rRNA. This chain is Large ribosomal subunit protein uL15, found in Saccharolobus solfataricus (strain ATCC 35092 / DSM 1617 / JCM 11322 / P2) (Sulfolobus solfataricus).